A 563-amino-acid chain; its full sequence is PTS system fructose-specific EIIB'BC component (563 aa).

PTS EIIB type-2 domains are found at residues 1 to 85 (MKTL…KGHA) and 104 to 201 (KRVV…KAVA). C112 acts as the Phosphocysteine intermediate; for EIIB activity in catalysis. A Phosphocysteine; by EIIA modification is found at C112. One can recognise a PTS EIIC type-2 domain in the interval 226–561 (AYRHLLTGVS…KRPEVDAVAK (336 aa)). Transmembrane regions (helical) follow at residues 236–256 (YMLPMVVAGGLCIALSFAFGI), 274–294 (GGSAFALMVPVLAGYIAFSIA), 304–324 (IGGMLAVSTGSGFIGGIIAGF), 349–369 (ILIIPLISSLVVGLAMIYLIG), 382–402 (WLQTMGTANAVLLGAILGGMM), 430–450 (MAAIMAAGMVPPLAMGLATMV), 463–483 (GKAALVLGLCFISEGAIPFAA), 489–509 (VLPCCIVGGALTGAISMAIGA), and 518–538 (LFVLLIPGAITPVLGYLVAII).

The protein localises to the cell inner membrane. The catalysed reaction is D-fructose(out) + N(pros)-phospho-L-histidyl-[protein] = D-fructose 1-phosphate(in) + L-histidyl-[protein]. The phosphoenolpyruvate-dependent sugar phosphotransferase system (sugar PTS), a major carbohydrate active transport system, catalyzes the phosphorylation of incoming sugar substrates concomitantly with their translocation across the cell membrane. The enzyme II FruAB PTS system is involved in fructose transport. This Escherichia coli (strain K12) protein is PTS system fructose-specific EIIB'BC component.